The following is a 232-amino-acid chain: Small ribosomal subunit protein uS5 (232 aa).

A disordered region spans residues 1–47 (MAAEVTETAQPVETAASTDNNREQREPRRGGRERNPNRDRGNRDADK). Positions 7–19 (ETAQPVETAASTD) are enriched in polar residues. Basic and acidic residues predominate over residues 20–47 (NNREQREPRRGGRERNPNRDRGNRDADK). In terms of domain architecture, S5 DRBM spans 50-113 (FLERVVTINR…EEAKKNFFRV (64 aa)).

It belongs to the universal ribosomal protein uS5 family. As to quaternary structure, part of the 30S ribosomal subunit. Contacts proteins S4 and S8.

Its function is as follows. With S4 and S12 plays an important role in translational accuracy. Functionally, located at the back of the 30S subunit body where it stabilizes the conformation of the head with respect to the body. This is Small ribosomal subunit protein uS5 from Leifsonia xyli subsp. xyli (strain CTCB07).